A 524-amino-acid polypeptide reads, in one-letter code: uncharacterized protein (524 aa).

The segment covering 83 to 101 (NSTPSKQAKPLQRNSPYQG) has biased composition (polar residues). Disordered stretches follow at residues 83-108 (NSTPSKQAKPLQRNSPYQGNSQSENQ) and 155-179 (PPCNIETNEDDSGNNEYNNNKKRPR).

Its subcellular location is the cytoplasm. This is an uncharacterized protein from Saccharomyces cerevisiae (strain ATCC 204508 / S288c) (Baker's yeast).